Consider the following 580-residue polypeptide: Cytochrome c oxidase subunit 1 (580 aa).

The tract at residues 1–25 (MTAVAPRVDGHVAPQRPEPTGHARK) is disordered. Residues 43–63 (IMYIIMSFSFFFLGGLMALLI) form a helical membrane-spanning segment. Histidine 87 is a Fe(II)-heme a binding site. 6 helical membrane passes run 90–110 (VMLL…VLPL), 122–142 (LNAF…AGFL), 171–191 (MWII…INML), 214–234 (IFVT…AALG), 259–279 (LFWF…FGII), and 292–312 (FGYI…MAVW). Positions 265 and 269 each coordinate Cu cation. Residues 265 to 269 (HPEVY) constitute a cross-link (1'-histidyl-3'-tyrosine (His-Tyr)). Cu cation is bound by residues histidine 314 and histidine 315. The next 2 membrane-spanning stretches (helical) occupy residues 316–336 (MFVT…LISV) and 360–380 (MIWA…GIML). Residue histidine 398 participates in heme a3 binding. A run of 3 helical transmembrane segments spans residues 399–419 (FHYT…YFWF), 434–454 (IHFW…HWLG), and 477–497 (ISTI…WNVF). Histidine 400 lines the Fe(II)-heme a pocket.

It belongs to the heme-copper respiratory oxidase family. Associates with subunits II, III and IV to form cytochrome c oxidase. Requires Cu(2+) as cofactor. Heme is required as a cofactor.

It is found in the cell membrane. The catalysed reaction is 4 Fe(II)-[cytochrome c] + O2 + 8 H(+)(in) = 4 Fe(III)-[cytochrome c] + 2 H2O + 4 H(+)(out). It functions in the pathway energy metabolism; oxidative phosphorylation. In terms of biological role, cytochrome c oxidase is the component of the respiratory chain that catalyzes the reduction of oxygen to water. Subunits 1-3 form the functional core of the enzyme complex. CO I is the catalytic subunit of the enzyme. Electrons originating in cytochrome c are transferred via the copper A center of subunit 2 and heme A of subunit 1 to the bimetallic center formed by heme A3 and copper B. This chain is Cytochrome c oxidase subunit 1 (ctaD), found in Corynebacterium efficiens (strain DSM 44549 / YS-314 / AJ 12310 / JCM 11189 / NBRC 100395).